Reading from the N-terminus, the 25-residue chain is Neuromedin-U-25 (25 aa).

Asn-25 carries the asparagine amide modification.

The protein belongs to the NmU family.

Its subcellular location is the secreted. Stimulates uterine smooth muscle contraction and causes selective vasoconstriction. In Rana temporaria (European common frog), this protein is Neuromedin-U-25.